A 162-amino-acid polypeptide reads, in one-letter code: Mitochondrial intermembrane space import and assembly protein 40 homolog (162 aa).

Residues 1 to 61 (MGQAQSDENS…DNENESLEAK (61 aa)) form a disordered region. Positions 9–18 (NSIPTTTTTN) are enriched in low complexity. 3 disulfide bridges follow: Cys-68–Cys-70, Cys-79–Cys-112, and Cys-89–Cys-102. The region spanning 76 to 120 (NGSCGSQFSEAFLCFLKSTAEEKGSDCVNPFVALQSCINANPDAF) is the CHCH domain. Short sequence motifs (cx9C motif) lie at residues 79–89 (CGSQFSEAFLC) and 102–112 (CVNPFVALQSC). A disordered region spans residues 119-162 (AFSKSVTGDEKETEKKEEQPPVQDHRIIPPLWAKDPPRSGNSKL). Basic and acidic residues predominate over residues 125 to 145 (TGDEKETEKKEEQPPVQDHRI).

The protein resides in the mitochondrion intermembrane space. It is found in the peroxisome matrix. Its function is as follows. Required for the import and folding of small cysteine-containing proteins in the mitochondrial intermembrane space. Involved in the mitochondrial oxidative folding of the copper-zinc superoxide dismutase CSD1, the copper chaperone for superoxide dismutase CCS, and subunits of the mitochondrial membrane respiratory chain NADH dehydrogenase (Complex I). Involved in the peroxisomal oxidative folding of the copper-zinc superoxide dismutase CSD3, and the fatty acid beta-oxidation multifunctional protein AIM1. In Arabidopsis thaliana (Mouse-ear cress), this protein is Mitochondrial intermembrane space import and assembly protein 40 homolog.